The sequence spans 920 residues: Coatomer subunit beta'-1 (920 aa).

WD repeat units lie at residues 13 to 52 (QRSE…MVKS), 55 to 94 (VTEL…KIKV), 97 to 136 (AHAD…LCTQ), 140 to 180 (GHSH…PNFT), 183 to 224 (AHLK…CVQT), 227 to 266 (GHTH…LENT), 350 to 392 (TCDL…GSAL), and 460 to 500 (RIDV…SYFD). Residues 850-920 (LEQGDVLDEV…EQWVLTPPQE (71 aa)) are disordered. Over residues 854–875 (DVLDEVGEEGEDGEEEEEEDRQ) the composition is skewed to acidic residues.

Belongs to the WD repeat COPB2 family. In terms of assembly, oligomeric complex that consists of at least the alpha, beta, beta', gamma, delta, epsilon and zeta subunits.

It is found in the cytoplasm. Its subcellular location is the golgi apparatus membrane. The protein localises to the cytoplasmic vesicle. It localises to the COPI-coated vesicle membrane. In terms of biological role, the coatomer is a cytosolic protein complex that binds to dilysine motifs and reversibly associates with Golgi non-clathrin-coated vesicles, which further mediate biosynthetic protein transport from the ER, via the Golgi up to the trans Golgi network. Coatomer complex is required for budding from Golgi membranes, and is essential for the retrograde Golgi-to-ER transport of dilysine-tagged proteins. The polypeptide is Coatomer subunit beta'-1 (Arabidopsis thaliana (Mouse-ear cress)).